Reading from the N-terminus, the 101-residue chain is UPF0235 protein MMP1055 (101 aa).

The protein belongs to the UPF0235 family.

The protein is UPF0235 protein MMP1055 of Methanococcus maripaludis (strain DSM 14266 / JCM 13030 / NBRC 101832 / S2 / LL).